The sequence spans 437 residues: Serine--tRNA ligase (437 aa).

L-serine is bound at residue 227–229 (TAE). Residues 258–260 (RSE) and Val274 contribute to the ATP site. Glu281 lines the L-serine pocket. Position 347–350 (347–350 (ETHS)) interacts with ATP. Thr382 contributes to the L-serine binding site.

It belongs to the class-II aminoacyl-tRNA synthetase family. Type-1 seryl-tRNA synthetase subfamily. In terms of assembly, homodimer. The tRNA molecule binds across the dimer.

It is found in the cytoplasm. It catalyses the reaction tRNA(Ser) + L-serine + ATP = L-seryl-tRNA(Ser) + AMP + diphosphate + H(+). The enzyme catalyses tRNA(Sec) + L-serine + ATP = L-seryl-tRNA(Sec) + AMP + diphosphate + H(+). It functions in the pathway aminoacyl-tRNA biosynthesis; selenocysteinyl-tRNA(Sec) biosynthesis; L-seryl-tRNA(Sec) from L-serine and tRNA(Sec): step 1/1. Catalyzes the attachment of serine to tRNA(Ser). Is also able to aminoacylate tRNA(Sec) with serine, to form the misacylated tRNA L-seryl-tRNA(Sec), which will be further converted into selenocysteinyl-tRNA(Sec). This chain is Serine--tRNA ligase, found in Deinococcus geothermalis (strain DSM 11300 / CIP 105573 / AG-3a).